Here is a 281-residue protein sequence, read N- to C-terminus: F-actin-capping protein subunit alpha (281 aa).

Belongs to the F-actin-capping protein alpha subunit family. As to quaternary structure, component of the F-actin capping complex, composed of a heterodimer of an alpha and a beta subunit.

It is found in the cytoplasm. The protein resides in the cytoskeleton. In terms of biological role, F-actin-capping proteins bind in a Ca(2+)-independent manner to the fast growing ends of actin filaments (barbed end) thereby blocking the exchange of subunits at these ends. Unlike other capping proteins (such as gelsolin and severin), these proteins do not sever actin filaments. The polypeptide is F-actin-capping protein subunit alpha (acpB) (Dictyostelium discoideum (Social amoeba)).